Reading from the N-terminus, the 31-residue chain is Cytochrome b6-f complex subunit 6 (31 aa).

The chain crosses the membrane as a helical span at residues 4-26 (ITSYFGFLLAASTITPALFIGLS).

Belongs to the PetL family. The 4 large subunits of the cytochrome b6-f complex are cytochrome b6, subunit IV (17 kDa polypeptide, PetD), cytochrome f and the Rieske protein, while the 4 small subunits are PetG, PetL, PetM and PetN. The complex functions as a dimer.

The protein localises to the plastid. Its subcellular location is the chloroplast thylakoid membrane. Functionally, component of the cytochrome b6-f complex, which mediates electron transfer between photosystem II (PSII) and photosystem I (PSI), cyclic electron flow around PSI, and state transitions. PetL is important for photoautotrophic growth as well as for electron transfer efficiency and stability of the cytochrome b6-f complex. The chain is Cytochrome b6-f complex subunit 6 from Buxus microphylla (Littleleaf boxwood).